The sequence spans 379 residues: Chaperone protein DnaJ (379 aa).

Residues 5-70 (DYYETLGCDR…QKRAAYDRFG (66 aa)) form the J domain. A CR-type zinc finger spans residues 134-212 (GKTAQIKIPT…CGGAGRVTRE (79 aa)). Zn(2+) contacts are provided by Cys147, Cys150, Cys164, Cys167, Cys186, Cys189, Cys200, and Cys203. CXXCXGXG motif repeat units lie at residues 147–154 (CETCSGTG), 164–171 (CRMCGGAG), 186–193 (CPNCQGRG), and 200–207 (CSDCGGAG).

It belongs to the DnaJ family. In terms of assembly, homodimer. The cofactor is Zn(2+).

The protein localises to the cytoplasm. Its function is as follows. Participates actively in the response to hyperosmotic and heat shock by preventing the aggregation of stress-denatured proteins and by disaggregating proteins, also in an autonomous, DnaK-independent fashion. Unfolded proteins bind initially to DnaJ; upon interaction with the DnaJ-bound protein, DnaK hydrolyzes its bound ATP, resulting in the formation of a stable complex. GrpE releases ADP from DnaK; ATP binding to DnaK triggers the release of the substrate protein, thus completing the reaction cycle. Several rounds of ATP-dependent interactions between DnaJ, DnaK and GrpE are required for fully efficient folding. Also involved, together with DnaK and GrpE, in the DNA replication of plasmids through activation of initiation proteins. The protein is Chaperone protein DnaJ of Xanthobacter autotrophicus (strain ATCC BAA-1158 / Py2).